The following is a 434-amino-acid chain: Probable proline transporter 2 (434 aa).

11 consecutive transmembrane segments (helical) span residues 26-46 (PWYQ…VLGY), 49-69 (SVMV…AAAI), 106-126 (LTWA…IILA), 149-169 (IALS…LSAL), 171-191 (IWLG…FVLS), 213-233 (IFTT…GMLP), 251-271 (LWFQ…MGYW), 297-317 (LSAF…MYEF), 339-359 (VGVR…LPFL), 362-382 (FMSL…ANHM), and 403-423 (VAGF…LIMV).

This sequence belongs to the amino acid/polyamine transporter 2 family. Amino acid/auxin permease (AAAP) (TC 2.A.18.3) subfamily.

It localises to the cell membrane. In terms of biological role, proline transporter that mediates proline transport across the plasma membrane. The protein is Probable proline transporter 2 of Oryza sativa subsp. japonica (Rice).